The primary structure comprises 138 residues: Acidic phospholipase A2 (138 aa).

The first 16 residues, M1–G16, serve as a signal peptide directing secretion. 7 cysteine pairs are disulfide-bonded: C42–C131, C44–C60, C59–C111, C65–C138, C66–C104, C73–C97, and C91–C102. Y43, G45, and G47 together coordinate Ca(2+). Residue H63 is part of the active site. D64 lines the Ca(2+) pocket. D105 is an active-site residue.

The protein belongs to the phospholipase A2 family. Group II subfamily. D49 sub-subfamily. As to quaternary structure, homodimer. Ca(2+) is required as a cofactor. As to expression, expressed by the venom gland.

Its subcellular location is the secreted. The catalysed reaction is a 1,2-diacyl-sn-glycero-3-phosphocholine + H2O = a 1-acyl-sn-glycero-3-phosphocholine + a fatty acid + H(+). PLA2 catalyzes the calcium-dependent hydrolysis of the 2-acyl groups in 3-sn-phosphoglycerides. The protein is Acidic phospholipase A2 of Crotalus atrox (Western diamondback rattlesnake).